Consider the following 284-residue polypeptide: Tropomyosin (284 aa).

The stretch at 1-284 forms a coiled coil; that stretch reads MDAIKKKMQA…DQTFAEIAGY (284 aa). The interval 103-133 is disordered; it reads EEKLATTTEKLEEASKAADESERNRKVLEGR.

It belongs to the tropomyosin family. As to quaternary structure, homodimer.

Its function is as follows. Tropomyosin, in association with the troponin complex, plays a central role in the calcium dependent regulation of muscle contraction. The chain is Tropomyosin from Chlamys nipponensis akazara (Akazara scallop).